The sequence spans 101 residues: uncharacterized protein (101 aa).

Positions 39-74 (CDERHGRPLPHSQESQHGSATSKKAVRGTADTAPLE) are disordered. Residues 50–60 (SQESQHGSATS) show a composition bias toward polar residues.

This is an uncharacterized protein from Homo sapiens (Human).